Here is a 579-residue protein sequence, read N- to C-terminus: UPF0324 membrane protein DVU_0943 (579 aa).

10 helical membrane passes run 26 to 45, 193 to 215, 225 to 243, 250 to 272, 305 to 327, 369 to 391, 430 to 452, 473 to 495, 515 to 533, and 546 to 568; these read YWAIWLGFVILIAGMWLFLA, AFNISTSLPMLMVVMGLFFAIGM, FLVGFIGVFVVAVIAQMMG, YWGIGTEAWAIIIGMLIANTVGT, IGIPGIFVAWVVTPIVLICTFIF, LTLSIGLSLVFTAIMMIVMPAFI, AATIKMIQNVLIGVVAFGVAVYW, FPKFVLGFLTASIIFSIISGSLG, LRGWFFCLAFTAIGLATNF, and LILYVCGQSFNLVLTLTMAYIMF.

The protein belongs to the UPF0324 family.

Its subcellular location is the cell membrane. This Nitratidesulfovibrio vulgaris (strain ATCC 29579 / DSM 644 / CCUG 34227 / NCIMB 8303 / VKM B-1760 / Hildenborough) (Desulfovibrio vulgaris) protein is UPF0324 membrane protein DVU_0943.